A 466-amino-acid polypeptide reads, in one-letter code: Oryzain beta chain (466 aa).

Positions 1-21 (MAARAAAAAFLLLLIVGAATA) are cleaved as a signal peptide. A propeptide spans 22-140 (APDMSIISYN…ERYRHDGVEE (119 aa)) (activation peptide). Disulfide bonds link Cys-162–Cys-205, Cys-196–Cys-238, and Cys-296–Cys-347. The active site involves Cys-165. Catalysis depends on residues His-302 and Asn-322. A glycan (N-linked (GlcNAc...) asparagine) is linked at Asn-341. A disordered region spans residues 358-380 (KSGANPPKPSPTPPTPPTPPPPS). The propeptide at 362–466 (NPPKPSPTPP…KRTLAKLNTA (105 aa)) is removed in mature form. Over residues 363–380 (PPKPSPTPPTPPTPPPPS) the composition is skewed to pro residues. 2 disulfides stabilise this stretch: Cys-386–Cys-398 and Cys-392–Cys-413. Residue Asn-389 is glycosylated (N-linked (GlcNAc...) asparagine).

It belongs to the peptidase C1 family. In terms of tissue distribution, expressed only in seeds.

Functionally, probable thiol protease. The sequence is that of Oryzain beta chain from Oryza sativa subsp. japonica (Rice).